A 34-amino-acid chain; its full sequence is MSDIN-like toxin proprotein 3 (34 aa).

A propeptide spanning residues 1 to 10 is cleaved from the precursor; it reads MSDINTARLP. The cyclopeptide (Phe-Pro) cross-link spans 11–20; sequence FFQPPEFRPP. A propeptide spanning residues 21-34 is cleaved from the precursor; sequence CVGDDIEMVLTRGE.

It belongs to the MSDIN fungal toxin family. Post-translationally, processed by the macrocyclase-peptidase enzyme POPB to yield a toxic cyclic decapeptide. POPB first removes 10 residues from the N-terminus. Conformational trapping of the remaining peptide forces the enzyme to release this intermediate rather than proceed to macrocyclization. The enzyme rebinds the remaining peptide in a different conformation and catalyzes macrocyclization of the N-terminal 10 residues.

Probable toxin that belongs to the MSDIN-like toxin family responsible for a large number of food poisoning cases and deaths. The polypeptide is MSDIN-like toxin proprotein 3 (Amanita bisporigera (Destroying angel)).